The following is a 510-amino-acid chain: MSKKPVALIILDGFALRDEDKGNAVTHAKKPNFDRFWNEYPHATLQASGEAVGLPEGQMGNSEVGHLNIGAGRIVYQSLTRVNVAIREGEFEQNETLLAAVKHAKEKGTNLHLFGLLSDGGVHSHIEHLYALLRLAKSEGLEKVYIHGFLDGRDVAPQSAETYLKELNEKIEEYGVGEIATLSGRYYSMDRDKRWERVEKSYRAMVYGEGPSYTSAEECVKDSYDNGIYDEFVLPSVITKEDGSPVATIQDEDAVIFYNFRPDRAIQISNTFANEDFRSFDRGEKHPKHLHFVCLTHFSETVDGYVAFKPINLDNTLGEVLSQNNLKQLRIAETEKYPHVTFFMSGGREAEFPGETRILIDSPKVATYDLKPEMSAYEVTDALLAEIEGDKQDAILLNFANPDMVGHSGMLEPTVKAIETVDECLGKIVDAILAKGGTAIITADHGNADEVITLEGNPMTAHTTNPVPVIVTKQGLELREDGILGDLAPTMLTLLDVAQPKEMTGKTLIK.

Positions 12 and 62 each coordinate Mn(2+). Serine 62 serves as the catalytic Phosphoserine intermediate. Substrate-binding positions include histidine 123, 153 to 154, arginine 185, arginine 191, 261 to 264, and lysine 336; these read RD and RPDR. Positions 403, 407, 444, 445, and 462 each coordinate Mn(2+).

The protein belongs to the BPG-independent phosphoglycerate mutase family. In terms of assembly, monomer. The cofactor is Mn(2+).

The catalysed reaction is (2R)-2-phosphoglycerate = (2R)-3-phosphoglycerate. Its pathway is carbohydrate degradation; glycolysis; pyruvate from D-glyceraldehyde 3-phosphate: step 3/5. Its function is as follows. Essential for rapid growth and for sporulation. Catalyzes the interconversion of 2-phosphoglycerate and 3-phosphoglycerate. This chain is 2,3-bisphosphoglycerate-independent phosphoglycerate mutase, found in Priestia megaterium (strain ATCC 12872 / QMB1551) (Bacillus megaterium).